The primary structure comprises 62 residues: Short neurotoxin C (62 aa).

Residues 1-16 (RRCFNQQSSQPQTNKS) are compositionally biased toward polar residues. The disordered stretch occupies residues 1–21 (RRCFNQQSSQPQTNKSCPPGE). 4 disulfides stabilise this stretch: cysteine 3–cysteine 24, cysteine 17–cysteine 41, cysteine 43–cysteine 54, and cysteine 55–cysteine 60.

The protein belongs to the three-finger toxin family. Short-chain subfamily. Type I alpha-neurotoxin sub-subfamily. In terms of tissue distribution, expressed by the venom gland.

The protein resides in the secreted. Binds to muscle nicotinic acetylcholine receptor (nAChR) and inhibit acetylcholine from binding to the receptor, thereby impairing neuromuscular transmission. The sequence is that of Short neurotoxin C from Laticauda crockeri (Crocker's sea snake).